The sequence spans 215 residues: Deoxyribose-phosphate aldolase (215 aa).

Aspartate 89 acts as the Proton donor/acceptor in catalysis. Catalysis depends on lysine 150, which acts as the Schiff-base intermediate with acetaldehyde. The active-site Proton donor/acceptor is the lysine 174.

This sequence belongs to the DeoC/FbaB aldolase family. DeoC type 1 subfamily.

It is found in the cytoplasm. The enzyme catalyses 2-deoxy-D-ribose 5-phosphate = D-glyceraldehyde 3-phosphate + acetaldehyde. It functions in the pathway carbohydrate degradation; 2-deoxy-D-ribose 1-phosphate degradation; D-glyceraldehyde 3-phosphate and acetaldehyde from 2-deoxy-alpha-D-ribose 1-phosphate: step 2/2. Functionally, catalyzes a reversible aldol reaction between acetaldehyde and D-glyceraldehyde 3-phosphate to generate 2-deoxy-D-ribose 5-phosphate. This chain is Deoxyribose-phosphate aldolase, found in Natronomonas pharaonis (strain ATCC 35678 / DSM 2160 / CIP 103997 / JCM 8858 / NBRC 14720 / NCIMB 2260 / Gabara) (Halobacterium pharaonis).